Here is a 185-residue protein sequence, read N- to C-terminus: Ribosome-recycling factor (185 aa).

Belongs to the RRF family.

The protein localises to the cytoplasm. Functionally, responsible for the release of ribosomes from messenger RNA at the termination of protein biosynthesis. May increase the efficiency of translation by recycling ribosomes from one round of translation to another. The chain is Ribosome-recycling factor from Bacillus pumilus (strain SAFR-032).